A 1023-amino-acid polypeptide reads, in one-letter code: Presequence protease, mitochondrial (1023 aa).

The N-terminal 62 residues, 1-62 (MFRQSKTIIT…PDLFLTAVKL (62 aa)), are a transit peptide targeting the mitochondrion. H99 serves as a coordination point for Zn(2+). The Proton acceptor role is filled by E102. H103 and E200 together coordinate Zn(2+). A disulfide bridge links C114 with C551.

This sequence belongs to the peptidase M16 family. PreP subfamily. In terms of assembly, monomer and homodimer; homodimerization is induced by binding of the substrate. Requires Zn(2+) as cofactor. In terms of processing, a disulfide bond locks the enzyme in the closed conformation preventing substrate entry into the catalytic chamber.

It localises to the mitochondrion matrix. Mainly exists in a closed and catalytically competent conformation but a closed-to-open switch allows substrate entry into the catalytic chamber. Substrate binding induces closure and dimerization. A disulfide bond may lock the enzyme in a closed conformation preventing substrate entry into the catalytic chamber, participating in redox regulation of the enzyme. Inhibited by metal-chelating agents. Inhibited by nickel and zinc excess, and slightly activated by manganese. Its function is as follows. Metalloendopeptidase of the mitochondrial matrix that functions in peptide cleavage and degradation rather than in protein processing. Has an ATP-independent activity. Specifically cleaves peptides in the range of 5 to 65 residues. Shows a preference for cleavage after small polar residues and before basic residues, but without any positional preference. Degrades the transit peptides of mitochondrial proteins after their cleavage. Also degrades other unstructured peptides. This Danio rerio (Zebrafish) protein is Presequence protease, mitochondrial (pitrm1).